An 846-amino-acid chain; its full sequence is Rho GTPase-activating protein 12 (846 aa).

The region spanning Pro12–Arg74 is the SH3 domain. Residues Leu152–Arg175 show a composition bias toward polar residues. The segment at Leu152–Pro241 is disordered. A phosphoserine mark is found at Ser165 and Ser176. Residues Thr191–Asp200 show a composition bias toward polar residues. Residues Ser201, Ser213, and Ser215 each carry the phosphoserine modification. The segment covering Thr224 to Asn234 has biased composition (polar residues). 2 positions are modified to phosphothreonine: Thr230 and Thr231. Ser240 is subject to Phosphoserine. At Tyr243 the chain carries Phosphotyrosine. 2 WW domains span residues Ile265–Trp298 and Asp358–Tyr391. Residues Trp293 to Glu316 form a disordered region. 2 disordered regions span residues Asp428 to Lys466 and Glu580 to Asn629. Residues Asn445–Pro461 show a composition bias toward polar residues. Residues Asp463–Asn575 form the PH domain. Over residues Glu580 to Pro590 the composition is skewed to acidic residues. A Phosphoserine modification is found at Ser592. Over residues Gly594 to Lys609 the composition is skewed to basic and acidic residues. The Rho-GAP domain occupies Ser656–Phe844.

Its function is as follows. GTPase activator for the Rho-type GTPases by converting them to an inactive GDP-bound state. The chain is Rho GTPase-activating protein 12 (ARHGAP12) from Homo sapiens (Human).